The following is a 246-amino-acid chain: Bis(5'-nucleosyl)-tetraphosphatase PrpE [asymmetrical] (246 aa).

Belongs to the PrpE family. Ni(2+) serves as cofactor.

The enzyme catalyses P(1),P(4)-bis(5'-guanosyl) tetraphosphate + H2O = GMP + GTP + 2 H(+). Asymmetrically hydrolyzes Ap4p to yield AMP and ATP. In Bacillus cereus (strain B4264), this protein is Bis(5'-nucleosyl)-tetraphosphatase PrpE [asymmetrical].